We begin with the raw amino-acid sequence, 411 residues long: Glucose-1-phosphate adenylyltransferase (411 aa).

Residues Gly164, 179–180, and Ser197 contribute to the alpha-D-glucose 1-phosphate site; that span reads EK.

Belongs to the bacterial/plant glucose-1-phosphate adenylyltransferase family. As to quaternary structure, homotetramer.

The catalysed reaction is alpha-D-glucose 1-phosphate + ATP + H(+) = ADP-alpha-D-glucose + diphosphate. It participates in glycan biosynthesis; glycogen biosynthesis. Involved in the biosynthesis of ADP-glucose, a building block required for the elongation reactions to produce glycogen. Catalyzes the reaction between ATP and alpha-D-glucose 1-phosphate (G1P) to produce pyrophosphate and ADP-Glc. The protein is Glucose-1-phosphate adenylyltransferase of Corynebacterium kroppenstedtii (strain DSM 44385 / JCM 11950 / CIP 105744 / CCUG 35717).